A 242-amino-acid chain; its full sequence is Small ribosomal subunit protein uS2 (242 aa).

It belongs to the universal ribosomal protein uS2 family.

The chain is Small ribosomal subunit protein uS2 from Shewanella pealeana (strain ATCC 700345 / ANG-SQ1).